The chain runs to 183 residues: Calmodulin-like protein 3 (183 aa).

EF-hand domains follow at residues 7–42, 43–78, 80–115, and 116–151; these read EQIA…LGQS, PTEA…KLRD, GAED…LSDP, and LSDD…KRRQ. Ca(2+)-binding residues include aspartate 20, aspartate 22, aspartate 24, threonine 26, glutamate 31, aspartate 56, aspartate 58, serine 60, serine 62, glutamate 67, aspartate 93, aspartate 95, asparagine 97, glutamate 104, aspartate 129, aspartate 131, aspartate 133, glutamine 135, and glutamate 140. The interval 154-183 is disordered; that stretch reads MEGHGSGGHRSSNSHKKSGCCGPNSSCTIL. 2 S-palmitoyl cysteine lipidation sites follow: cysteine 173 and cysteine 174. Cysteine 180 bears the Cysteine methyl ester mark. A lipid anchor (S-farnesyl cysteine) is attached at cysteine 180. Residues 181 to 183 constitute a propeptide, removed in mature form; it reads TIL.

The protein belongs to the calmodulin family.

It localises to the membrane. Functionally, potential calcium sensor. This is Calmodulin-like protein 3 (CML3) from Oryza sativa subsp. japonica (Rice).